A 138-amino-acid chain; its full sequence is Ribosome-binding factor A (138 aa).

It belongs to the RbfA family. Monomer. Binds 30S ribosomal subunits, but not 50S ribosomal subunits or 70S ribosomes.

Its subcellular location is the cytoplasm. Functionally, one of several proteins that assist in the late maturation steps of the functional core of the 30S ribosomal subunit. Associates with free 30S ribosomal subunits (but not with 30S subunits that are part of 70S ribosomes or polysomes). Required for efficient processing of 16S rRNA. May interact with the 5'-terminal helix region of 16S rRNA. The polypeptide is Ribosome-binding factor A (Chromobacterium violaceum (strain ATCC 12472 / DSM 30191 / JCM 1249 / CCUG 213 / NBRC 12614 / NCIMB 9131 / NCTC 9757 / MK)).